We begin with the raw amino-acid sequence, 76 residues long: Omega-conotoxin-like TxO5 (76 aa).

The first 22 residues, 1–22 (MKLTCMMIVAVLFLTAWTFVTA), serve as a signal peptide directing secretion. Positions 23-48 (ITSNGLENLFPKAHHEMKNPEASKLN) are excised as a propeptide. Cystine bridges form between Cys-51-Cys-66, Cys-58-Cys-70, and Cys-65-Cys-75.

It belongs to the conotoxin O1 superfamily. As to expression, expressed by the venom duct.

Its subcellular location is the secreted. Its function is as follows. Omega-conotoxins act at presynaptic membranes, they bind and block voltage-gated calcium channels (Cav). The chain is Omega-conotoxin-like TxO5 from Conus textile (Cloth-of-gold cone).